Consider the following 101-residue polypeptide: Apolipoprotein C-II (101 aa).

Positions 1 to 22 (MGIRYLLVLVLVLLVLGCEVQG) are cleaved as a signal peptide. A lipid binding region spans residues 66 to 74 (TMDEKIREI). Residues 78–101 (STAAVSTYAGIFTDQLLSMLKGDQ) form a lipoprotein lipase cofactor region.

The protein belongs to the apolipoprotein C2 family. Proapolipoprotein C-II is synthesized as a sialic acid containing glycoprotein which is subsequently desialylated prior to its proteolytic processing. Post-translationally, proapolipoprotein C-II, the major form found in plasma undergoes proteolytic cleavage of its N-terminal hexapeptide to generate apolipoprotein C-II, which occurs as the minor form in plasma.

It is found in the secreted. In terms of biological role, component of chylomicrons, very low-density lipoproteins (VLDL), low-density lipoproteins (LDL), and high-density lipoproteins (HDL) in plasma. Plays an important role in lipoprotein metabolism as an activator of lipoprotein lipase. Both proapolipoprotein C-II and apolipoprotein C-II can activate lipoprotein lipase. This chain is Apolipoprotein C-II (APOC2), found in Phoca vitulina (Harbor seal).